Reading from the N-terminus, the 299-residue chain is MTKIKIVVIVGPTAVGKTALGISLAKAFNGEIISGDSQQVYRQLDIGTAKATQEEQEAAVHHLIDIREVTESYSAYDFVQDAQKAISDIVSRGKLPIIVGGTGLYLQSLLEGYHLGGQVDQEAVKAYRNELEQLDDHDLYERLQVNNITIEQVNRRRAIRALELAQFADELENAETAYEPLIIGLNDDRQVIYDRINQRVNRMLENGLLEEAKWLYEHYPTVQASRGIGYKELFPYFVGEMTLAEASDQLKQNTRRFAKRQLTWFRNRMAVSFTAITAPDYPQVVHDRVRDFLGQKEKS.

Gly11–Thr18 serves as a coordination point for ATP. Residue Thr13–Thr18 coordinates substrate. The tract at residues Asp36–Gln39 is interaction with substrate tRNA.

Belongs to the IPP transferase family. In terms of assembly, monomer. Requires Mg(2+) as cofactor.

The catalysed reaction is adenosine(37) in tRNA + dimethylallyl diphosphate = N(6)-dimethylallyladenosine(37) in tRNA + diphosphate. In terms of biological role, catalyzes the transfer of a dimethylallyl group onto the adenine at position 37 in tRNAs that read codons beginning with uridine, leading to the formation of N6-(dimethylallyl)adenosine (i(6)A). This Streptococcus pyogenes serotype M12 (strain MGAS2096) protein is tRNA dimethylallyltransferase.